We begin with the raw amino-acid sequence, 197 residues long: Ribonuclease HII (197 aa).

Residues E9–F197 form the RNase H type-2 domain. A divalent metal cation-binding residues include D15, E16, and D107.

Belongs to the RNase HII family. Mn(2+) serves as cofactor. The cofactor is Mg(2+).

Its subcellular location is the cytoplasm. The catalysed reaction is Endonucleolytic cleavage to 5'-phosphomonoester.. Its function is as follows. Endonuclease that specifically degrades the RNA of RNA-DNA hybrids. The protein is Ribonuclease HII of Haemophilus influenzae (strain 86-028NP).